The sequence spans 103 residues: MYAVFQSGGKQHRVSEGQTVRLEKLDIATGETIEFAEVLMIANGEEVKIGVPFVDGGVIKAEVVAHGRGEKVKIVKFRRRKHYRKQQGHRQWFTDVKITGISA.

This sequence belongs to the bacterial ribosomal protein bL21 family. Part of the 50S ribosomal subunit. Contacts protein L20.

Functionally, this protein binds to 23S rRNA in the presence of protein L20. In Salmonella agona (strain SL483), this protein is Large ribosomal subunit protein bL21.